A 300-amino-acid polypeptide reads, in one-letter code: UDP-N-acetylenolpyruvoylglucosamine reductase (300 aa).

Positions 27 to 192 constitute an FAD-binding PCMH-type domain; it reads KVGGPADYLA…ISAKFALKPG (166 aa). Arginine 171 is an active-site residue. The Proton donor role is filled by serine 221. Glutamate 291 is a catalytic residue.

Belongs to the MurB family. FAD serves as cofactor.

The protein resides in the cytoplasm. It carries out the reaction UDP-N-acetyl-alpha-D-muramate + NADP(+) = UDP-N-acetyl-3-O-(1-carboxyvinyl)-alpha-D-glucosamine + NADPH + H(+). It functions in the pathway cell wall biogenesis; peptidoglycan biosynthesis. In terms of biological role, cell wall formation. The chain is UDP-N-acetylenolpyruvoylglucosamine reductase from Streptococcus agalactiae serotype Ia (strain ATCC 27591 / A909 / CDC SS700).